A 447-amino-acid polypeptide reads, in one-letter code: tRNA modification GTPase MnmE (447 aa).

(6S)-5-formyl-5,6,7,8-tetrahydrofolate contacts are provided by Arg-24, Glu-81, and Lys-120. In terms of domain architecture, TrmE-type G spans Gly-216–Gly-371. K(+) is bound at residue Asn-226. Residues Asn-226–Ser-231, Thr-245–Thr-251, and Asp-270–Gly-273 each bind GTP. Ser-230 contributes to the Mg(2+) binding site. Residues Thr-245, Ile-247, and Thr-250 each contribute to the K(+) site. Mg(2+) is bound at residue Thr-251. A (6S)-5-formyl-5,6,7,8-tetrahydrofolate-binding site is contributed by Lys-447.

It belongs to the TRAFAC class TrmE-Era-EngA-EngB-Septin-like GTPase superfamily. TrmE GTPase family. In terms of assembly, homodimer. Heterotetramer of two MnmE and two MnmG subunits. The cofactor is K(+).

It is found in the cytoplasm. Exhibits a very high intrinsic GTPase hydrolysis rate. Involved in the addition of a carboxymethylaminomethyl (cmnm) group at the wobble position (U34) of certain tRNAs, forming tRNA-cmnm(5)s(2)U34. The protein is tRNA modification GTPase MnmE of Vesicomyosocius okutanii subsp. Calyptogena okutanii (strain HA).